The sequence spans 396 residues: MPVVLVVNSGSSSFKYQLIEMDTETVLASGLVERIGEEVGSTRHKAGGDSWERELPIADHTAGFQAMLDAFADHGPSLEEGPPVAIGHRVVHGGDVFVEPTVVTEKVKADIDDLSALAPLHNPGALQGIQAAQTAFPDVAHVAVFDTAFHQTLPAEAYTYAIDRELAAAHRIRRYGFHGTSHKYVSEAAARLLGKPLEETRIIVLHLGNGASAAAVQGGRSIDTSMGLTPLEGLVMGTRSGDIDPAILFHLARHTDLGLDDLETLLNRKSGLLGLTGLGDMRDVQRAAADGDEDAQTALGVYRHRIRHYVGAYAAQLGGVDAVVFTAGVGENNPLVRRRSLAGLEFMGIGIDDDRNELISSEARFVSPDGSPVAVLVIPTDEELEIARQSLAATGN.

A Mg(2+)-binding site is contributed by Asn-8. ATP is bound at residue Lys-15. Arg-89 contributes to the substrate binding site. Asp-146 (proton donor/acceptor) is an active-site residue. ATP-binding positions include 206–210, 280–282, and 328–332; these read HLGNG, DMR, and GVGEN. Glu-382 contacts Mg(2+).

This sequence belongs to the acetokinase family. As to quaternary structure, homodimer. Mg(2+) serves as cofactor. Requires Mn(2+) as cofactor.

The protein localises to the cytoplasm. It carries out the reaction acetate + ATP = acetyl phosphate + ADP. It functions in the pathway metabolic intermediate biosynthesis; acetyl-CoA biosynthesis; acetyl-CoA from acetate: step 1/2. Its function is as follows. Catalyzes the formation of acetyl phosphate from acetate and ATP. Can also catalyze the reverse reaction. This is Acetate kinase from Clavibacter sepedonicus (Clavibacter michiganensis subsp. sepedonicus).